The sequence spans 184 residues: 3-hydroxydecanoyl-[acyl-carrier-protein] dehydratase (184 aa).

The active site involves H77.

The protein belongs to the thioester dehydratase family. FabA subfamily. In terms of assembly, homodimer.

The protein resides in the cytoplasm. The enzyme catalyses a (3R)-hydroxyacyl-[ACP] = a (2E)-enoyl-[ACP] + H2O. It carries out the reaction (3R)-hydroxydecanoyl-[ACP] = (2E)-decenoyl-[ACP] + H2O. It catalyses the reaction (2E)-decenoyl-[ACP] = (3Z)-decenoyl-[ACP]. It participates in lipid metabolism; fatty acid biosynthesis. Functionally, necessary for the introduction of cis unsaturation into fatty acids. Catalyzes the dehydration of (3R)-3-hydroxydecanoyl-ACP to E-(2)-decenoyl-ACP and then its isomerization to Z-(3)-decenoyl-ACP. Can catalyze the dehydratase reaction for beta-hydroxyacyl-ACPs with saturated chain lengths up to 16:0, being most active on intermediate chain length. The polypeptide is 3-hydroxydecanoyl-[acyl-carrier-protein] dehydratase (Hyphomonas neptunium (strain ATCC 15444)).